The primary structure comprises 522 residues: Sensory neuron membrane protein 1 (522 aa).

Residues 1 to 11 (MQLAKPLKYAA) are Cytoplasmic-facing. The helical transmembrane segment at 12–32 (ISGIVAFVGLMFGWVIFPAIL) threads the bilayer. Residues 33–458 (KSQLKKEMAL…SQLFIPKRVV (426 aa)) are Extracellular-facing. N-linked (GlcNAc...) asparagine glycosylation is found at Asn67, Asn105, and Asn229. Cystine bridges form between Cys268–Cys333, Cys297–Cys352, and Cys335–Cys341. An N-linked (GlcNAc...) asparagine glycan is attached at Asn440. The helical transmembrane segment at 459–479 (SVVCWCMISFGSLGVIAAVIF) threads the bilayer. The Cytoplasmic segment spans residues 480-522 (HFKGDIMHLAVAGDNSVSKIKPENDENKEVGVMGQNQEPAKVM). Residues 500–522 (KPENDENKEVGVMGQNQEPAKVM) are disordered. Residues 513–522 (GQNQEPAKVM) show a composition bias toward polar residues.

Belongs to the CD36 family. In terms of tissue distribution, principal component of the olfactory cilia membrane. Detected in both male and female antennae but not present in leg, abdomen, thorax or head.

It is found in the cell membrane. In terms of biological role, plays an olfactory role that is not restricted to pheromone sensitivity. The chain is Sensory neuron membrane protein 1 from Bombyx mori (Silk moth).